The primary structure comprises 60 residues: MDPCECSKSGTCNCGGSCTCTNCSCKSCKKSCCPCCPSGCTKCASGCVCKGKTCDTSCCQ.

Residues 1-28 are beta; sequence MDPCECSKSGTCNCGGSCTCTNCSCKSC. Residues Cys4, Cys6, Cys12, Cys14, Cys18, Cys20, Cys23, Cys25, Cys28, Cys32, Cys33, Cys35, Cys36, Cys40, Cys43, Cys47, Cys49, Cys54, Cys58, and Cys59 each contribute to the a divalent metal cation site. Residues 29-60 are alpha; that stretch reads KKSCCPCCPSGCTKCASGCVCKGKTCDTSCCQ.

The protein belongs to the metallothionein superfamily. Type 1 family.

Its function is as follows. Metallothioneins have a high content of cysteine residues that bind various heavy metals. The sequence is that of Metallothionein A (mta) from Chionodraco rastrospinosus (Ocellated icefish).